A 644-amino-acid polypeptide reads, in one-letter code: MAKIIGIDLGTTNSVVAVMEGGEPKVIPNEEGGRTTPSVVGFTKTGERLVGQVAKRQAITNPENTIFSIKRFMGRRYNEVNEEMKMVPYKVQQAGDHVAVLAQGKEYSPAEISAYILQKLKKAAEDYLGETVTEAVITVPAYFNDAQRQATKDAGKIAGLDVKRIINEPTAAALAYGLDKKKDETIAVYDFGGGTFDISILEVGEGVIEVKSTNGDTHLGGDNIDQRIVEWLIDEFKKKEGLDLRAKGNEMALQRLRDGAERAKIELSTTMETEINLPFITADASGPKHLVERLTRSKLEEMVRDLVDRSIEPCRQALKDAGIDASKIDEVVLVGGQTRMPRIQQVVKEFFGREPHRGVNPDEVVAIGAAIQGGVLKGEVKDLLLLDVTPLTLSIETLGGVATPMIPRNTTIPTKKTETFSTAADNQNSVEIHVLQGERPMAGQNRTLGKFHLTGLPPAPRGVPQIEVTFDIDANGILNVTAKDNATGKDQKITITSSSGLSKEEVERMAKEADAHAAEDKAKKEEIEARNQLDGMVYQIEKMLKENGDKISPSERGDVENALADSKKALETNDAKQMNAARERLTAASHKLAEAMYKQAAPGAGAPGAGPGPEAAGGAQQAQAEPKKDEGVIDAEYVDVDEKK.

At T195 the chain carries Phosphothreonine; by autocatalysis. The tract at residues 598 to 644 is disordered; sequence KQAAPGAGAPGAGPGPEAAGGAQQAQAEPKKDEGVIDAEYVDVDEKK. The segment covering 612 to 624 has biased composition (low complexity); sequence GPEAAGGAQQAQA. A compositionally biased stretch (acidic residues) spans 632–644; that stretch reads VIDAEYVDVDEKK.

This sequence belongs to the heat shock protein 70 family.

Acts as a chaperone. This Koribacter versatilis (strain Ellin345) protein is Chaperone protein DnaK.